Reading from the N-terminus, the 305-residue chain is Probable pyridoxal 5'-phosphate synthase subunit pdx1 (305 aa).

D-ribose 5-phosphate is bound at residue Asp33. Lys90 acts as the Schiff-base intermediate with D-ribose 5-phosphate in catalysis. Residue Gly162 participates in D-ribose 5-phosphate binding. Arg174 contacts D-glyceraldehyde 3-phosphate. Residues Gly223 and 244–245 contribute to the D-ribose 5-phosphate site; that span reads GS.

It belongs to the PdxS/SNZ family. In terms of assembly, homohexamer.

It carries out the reaction aldehydo-D-ribose 5-phosphate + D-glyceraldehyde 3-phosphate + L-glutamine = pyridoxal 5'-phosphate + L-glutamate + phosphate + 3 H2O + H(+). The protein operates within cofactor biosynthesis; pyridoxal 5'-phosphate biosynthesis. In terms of biological role, catalyzes the formation of pyridoxal 5'-phosphate from ribose 5-phosphate (RBP), glyceraldehyde 3-phosphate (G3P) and ammonia. The ammonia is provided by pdx2. Can also use ribulose 5-phosphate and dihydroxyacetone phosphate as substrates, resulting from enzyme-catalyzed isomerization of RBP and G3P, respectively. This Dictyostelium discoideum (Social amoeba) protein is Probable pyridoxal 5'-phosphate synthase subunit pdx1 (pdx1).